The chain runs to 1323 residues: PAS domain-containing serine/threonine-protein kinase (1323 aa).

Residue Met-1 is modified to N-acetylmethionine. At Ser-19 the chain carries Phosphoserine. The tract at residues 20 to 47 is disordered; that stretch reads LPLPVSAEGPAAQTTAEPSRSFSSAHRH. Positions 31-43 are enriched in polar residues; sequence AQTTAEPSRSFSS. Phosphothreonine is present on Thr-34. 2 PAS domains span residues 119–190 and 335–402; these read SSPL…MEAD and YRAS…SLQL. At Ser-582 the chain carries Phosphoserine. Residues 837 to 857 form a disordered region; that stretch reads AASDRESPGHVPSTLDAGPED. A Phosphoserine modification is found at Ser-939. Residues 999 to 1251 enclose the Protein kinase domain; sequence YSTMSPLGSG…LEKLVTDPWV (253 aa). Residues 1005-1013, Lys-1028, and 1082-1089 contribute to the ATP site; these read LGSGAFGFV and EKHGSGLD. Residue Asp-1128 is the Proton acceptor of the active site. Asp-1146 is a binding site for ATP. Phosphothreonine; by autocatalysis is present on residues Thr-1161 and Thr-1165. A disordered region spans residues 1298–1323; that stretch reads CGGPVPGEAPNGQGCLHPGDPRLLTS.

The protein belongs to the protein kinase superfamily. CAMK Ser/Thr protein kinase family. Post-translationally, autophosphorylated on Thr-1161 and Thr-1165. Autophosphorylation is activated by phospholipids. Ubiquitously expressed, with slightly higher expression in brain, prostate and testis. Reduced expression was found in placenta. Present in germ cells of testis and in the midpiece of sperm tails (at protein level).

The protein localises to the cytoplasm. It is found in the nucleus. The enzyme catalyses L-seryl-[protein] + ATP = O-phospho-L-seryl-[protein] + ADP + H(+). It catalyses the reaction L-threonyl-[protein] + ATP = O-phospho-L-threonyl-[protein] + ADP + H(+). Protein kinase activity is inhibited by the first PAS domain: binding of an unidentified ligand desinhibits the protein kinase activity. May be activated by autophosphorylation on Thr-1161 and Thr-1165. The activating role of autophosphorylation at Thr-1161 is unclear: according to a report, autophosphorylation at Thr-1161 does not play a major role in activation. Autophosphorylation is enhanced upon phosphatidylinositol monophosphate (phosphatidylinositol 4-phosphate) binding and inhibited upon phosphatidylinositol bi- and tri-phosphate binding. In contrast, phosphorylation of target proteins is inhibited upon all phosphatidylinositol-binding (phosphatidylinositol mono- bi- and tri-phosphate). In terms of biological role, serine/threonine-protein kinase involved in energy homeostasis and protein translation. Phosphorylates EEF1A1, GYS1, PDX1 and RPS6. Probably plays a role under changing environmental conditions (oxygen, glucose, nutrition), rather than under standard conditions. Acts as a sensor involved in energy homeostasis: regulates glycogen synthase synthesis by mediating phosphorylation of GYS1, leading to GYS1 inactivation. May be involved in glucose-stimulated insulin production in pancreas and regulation of glucagon secretion by glucose in alpha cells; however such data require additional evidences. May play a role in regulation of protein translation by phosphorylating EEF1A1, leading to increase translation efficiency. May also participate in respiratory regulation. In Homo sapiens (Human), this protein is PAS domain-containing serine/threonine-protein kinase (PASK).